A 287-amino-acid polypeptide reads, in one-letter code: Lys-63-specific deubiquitinase (287 aa).

An MPN domain is found at 33–176; it reads VHLESDAFLV…YTCFQSVQAQ (144 aa). Zn(2+) contacts are provided by His-119, His-121, and Asp-132. The JAMM motif motif lies at 119–132; it reads HSHPHITVWPSHVD. Residues 256–283 are a coiled coil; it reads LQWLEDRLEQNKQSIITLQKEKELLTQE.

Belongs to the peptidase M67A family. BRCC36 subfamily. Monomer. Homodimer. Component of the BRISC complex, at least composed of abraxas2, brcc3, babam1 and babam2. Interacts with abraxas2; the interaction is direct and may form a heterotetramer. Component of the BRCA1-A complex. Both the BRCA1-A complex and the BRISC complex bind polyubiquitin. It depends on Zn(2+) as a cofactor.

It is found in the nucleus. Its subcellular location is the cytoplasm. The protein resides in the cytoskeleton. The protein localises to the spindle pole. Metalloprotease that specifically cleaves 'Lys-63'-linked polyubiquitin chains, leaving the last ubiquitin chain attached to its substrates. Catalytic subunit of the BRISC complex, a multiprotein complex that specifically cleaves 'Lys-63'-linked ubiquitin in various substrates; brcc3 does not have activity by itself, but needs to be associated into a higher-order assembly, for minimal in vitro activity. In Danio rerio (Zebrafish), this protein is Lys-63-specific deubiquitinase.